Reading from the N-terminus, the 63-residue chain is Conotoxin Pu5.4 (63 aa).

Residues 1–22 form the signal peptide; sequence MRCVPVFVILLLLIASTPSVDA. A propeptide spanning residues 23 to 50 is cleaved from the precursor; sequence TQKTKDDMSLASFHDNAKRFLQTLRNTR. Trp-62 is modified (tryptophan amide).

Belongs to the conotoxin T superfamily. In terms of processing, contains 2 disulfide bonds that can be either 'C1-C3, C2-C4' or 'C1-C4, C2-C3', since these disulfide connectivities have been observed for conotoxins with cysteine framework V (for examples, see AC P0DQQ7 and AC P81755). Expressed by the venom duct.

The protein localises to the secreted. The sequence is that of Conotoxin Pu5.4 from Conus pulicarius (Flea-bitten cone).